The chain runs to 383 residues: Delta(12) fatty acid desaturase FAD2 (383 aa).

A disordered region spans residues 1-29; sequence MGAGGRMQDPTNGGNKTEPEPIQRVPHEK. Residues 17 to 29 show a composition bias toward basic and acidic residues; the sequence is TEPEPIQRVPHEK. 2 helical membrane-spanning segments follow: residues 50 to 70 and 85 to 105; these read VIRSFSYVFYDLTIASILYYI and VAWPVYWAVQGCVLTGVWVIA. Residues 106–110 carry the Histidine box-1 motif; that stretch reads HECGH. Residues 118–138 traverse the membrane as a helical segment; it reads WLDDTVGLVLHSFLLVPYFSW. Positions 142-146 match the Histidine box-2 motif; it reads HRRHH. 3 consecutive transmembrane segments (helical) span residues 180-200, 226-246, and 252-272; these read ILTLLVTLTLGWPLYLTFNVS, IFISDAGILAVVFVLFRLAMT, and VLTMYGGPLLVVNGFLVLITF. The short motif at 316 to 320 is the Histidine box-3 element; sequence HVAHH.

The protein belongs to the fatty acid desaturase type 1 family. Expressed in leaves, flower buds and developing seeds.

The protein localises to the membrane. It functions in the pathway lipid metabolism; polyunsaturated fatty acid biosynthesis. In terms of biological role, catalyzes the desaturation of oleic acid to linoleic acid. Introduces a double bond at position 12 of 16:1(9Z) and 18:1(9Z). The protein is Delta(12) fatty acid desaturase FAD2 of Calendula officinalis (Pot marigold).